The sequence spans 87 residues: uncharacterized protein (87 aa).

This is an uncharacterized protein from Escherichia coli.